The chain runs to 358 residues: Peptide chain release factor 1 (358 aa).

The residue at position 237 (Gln-237) is an N5-methylglutamine.

This sequence belongs to the prokaryotic/mitochondrial release factor family. Post-translationally, methylated by PrmC. Methylation increases the termination efficiency of RF1.

It is found in the cytoplasm. Functionally, peptide chain release factor 1 directs the termination of translation in response to the peptide chain termination codons UAG and UAA. This Streptomyces griseus subsp. griseus (strain JCM 4626 / CBS 651.72 / NBRC 13350 / KCC S-0626 / ISP 5235) protein is Peptide chain release factor 1.